Consider the following 645-residue polypeptide: Cytochrome c oxidase subunit 1 (645 aa).

A helical membrane pass occupies residues 8–28; that stretch reads LNYFYFSMWTGLSGAALATMI. Positions 31 and 36 each coordinate Ca(2+). Fe(II)-heme a is bound at residue His54. Transmembrane regions (helical) follow at residues 56-76, 90-110, 247-267, 282-302, 337-357, 376-396, 410-430, and 438-458; these read LIMV…NFLI, LNSI…KIAF, VLSV…LTLI, VLIP…AIVT, LFWF…FGVA, IWAV…HMYL, ITIM…LTLA, and LVFL…FTGM. His343 lines the Cu cation pocket. A cross-link (1'-histidyl-3'-tyrosine (His-Tyr)) is located at residues 343 to 347; that stretch reads HPEVY. Tyr347 is an O2 binding site. The Cu cation site is built by His392 and His393. Residues His470 and Asp471 each contribute to the Mg(2+) site. 3 consecutive transmembrane segments (helical) span residues 475-495, 513-533, and 555-575; these read VVAH…FTGL, FLHL…MFFL, and LASC…FGIF. His478 is a binding site for heme a3. His480 serves as a coordination point for Fe(II)-heme a.

The protein belongs to the heme-copper respiratory oxidase family. Component of the cytochrome c oxidase (complex IV, CIV), a multisubunit enzyme composed of a catalytic core of 3 subunits and several supernumerary subunits. The complex exists as a monomer or a dimer and forms supercomplexes (SCs) in the inner mitochondrial membrane with ubiquinol-cytochrome c oxidoreductase (cytochrome b-c1 complex, complex III, CIII). Heme serves as cofactor. The cofactor is Cu cation.

It localises to the mitochondrion inner membrane. The catalysed reaction is 4 Fe(II)-[cytochrome c] + O2 + 8 H(+)(in) = 4 Fe(III)-[cytochrome c] + 2 H2O + 4 H(+)(out). The protein operates within energy metabolism; oxidative phosphorylation. Functionally, component of the cytochrome c oxidase, the last enzyme in the mitochondrial electron transport chain which drives oxidative phosphorylation. The respiratory chain contains 3 multisubunit complexes succinate dehydrogenase (complex II, CII), ubiquinol-cytochrome c oxidoreductase (cytochrome b-c1 complex, complex III, CIII) and cytochrome c oxidase (complex IV, CIV), that cooperate to transfer electrons derived from NADH and succinate to molecular oxygen, creating an electrochemical gradient over the inner membrane that drives transmembrane transport and the ATP synthase. Cytochrome c oxidase is the component of the respiratory chain that catalyzes the reduction of oxygen to water. Electrons originating from reduced cytochrome c in the intermembrane space (IMS) are transferred via the dinuclear copper A center (CU(A)) of subunit 2 and heme A of subunit 1 to the active site in subunit 1, a binuclear center (BNC) formed by heme A3 and copper B (CU(B)). The BNC reduces molecular oxygen to 2 water molecules using 4 electrons from cytochrome c in the IMS and 4 protons from the mitochondrial matrix. The polypeptide is Cytochrome c oxidase subunit 1 (COI) (Paramecium tetraurelia).